The sequence spans 160 residues: Cytochrome b6-f complex subunit 4 (160 aa).

Helical transmembrane passes span 36 to 56 (LLYI…GLAV), 95 to 115 (LLGI…PFIE), and 131 to 151 (VVFL…CLPI).

Belongs to the cytochrome b family. PetD subfamily. In terms of assembly, the 4 large subunits of the cytochrome b6-f complex are cytochrome b6, subunit IV (17 kDa polypeptide, PetD), cytochrome f and the Rieske protein, while the 4 small subunits are PetG, PetL, PetM and PetN. The complex functions as a dimer.

It localises to the cellular thylakoid membrane. Its function is as follows. Component of the cytochrome b6-f complex, which mediates electron transfer between photosystem II (PSII) and photosystem I (PSI), cyclic electron flow around PSI, and state transitions. The sequence is that of Cytochrome b6-f complex subunit 4 from Prochlorococcus marinus (strain MIT 9515).